The chain runs to 546 residues: Chaperonin GroEL (546 aa).

ATP-binding positions include 30–33 (TLGP), Lys-51, 87–91 (DGTTT), Gly-415, and Asp-495.

This sequence belongs to the chaperonin (HSP60) family. Forms a cylinder of 14 subunits composed of two heptameric rings stacked back-to-back. Interacts with the co-chaperonin GroES.

The protein localises to the cytoplasm. The enzyme catalyses ATP + H2O + a folded polypeptide = ADP + phosphate + an unfolded polypeptide.. Its function is as follows. Together with its co-chaperonin GroES, plays an essential role in assisting protein folding. The GroEL-GroES system forms a nano-cage that allows encapsulation of the non-native substrate proteins and provides a physical environment optimized to promote and accelerate protein folding. The polypeptide is Chaperonin GroEL (Brucella melitensis biotype 1 (strain ATCC 23456 / CCUG 17765 / NCTC 10094 / 16M)).